Consider the following 280-residue polypeptide: Inner kinetochore subunit fta1 (280 aa).

This sequence belongs to the CENP-L/IML3 family. As to quaternary structure, component of the inner kinetochore constitutive centromere-associated network (CCAN) (also known as central kinetochore Sim4 complex in fission yeast), which is composed of at least cnl2, cnp3, cnp20, fta1, fta2, fta3, fta4, fta6, fta7, mal2, mhf1, mhf2, mis6, mis15, mis17, sim4 and wip1.

The protein localises to the nucleus. It localises to the chromosome. Its subcellular location is the centromere. It is found in the kinetochore. In terms of biological role, component of the kinetochore, a multiprotein complex that assembles on centromeric DNA and attaches chromosomes to spindle microtubules, mediating chromosome segregation and sister chromatid segregation during meiosis and mitosis. Component of the inner kinetochore constitutive centromere-associated network (CCAN), which serves as a structural platform for outer kinetochore assembly. This chain is Inner kinetochore subunit fta1 (fta1), found in Schizosaccharomyces pombe (strain 972 / ATCC 24843) (Fission yeast).